The following is a 352-amino-acid chain: E3 ubiquitin-protein ligase RNF146 (352 aa).

Residues 36–74 (CAICLQTCVHPVSLPCKHVFCYLCVKGASWLGKRCALCR) form an RING-type zinc finger. Residues lysine 84 and lysine 94 each participate in a glycyl lysine isopeptide (Lys-Gly) (interchain with G-Cter in ubiquitin) cross-link. The region spanning 91–167 (EELKAASRGN…EHGRRRKIKR (77 aa)) is the WWE domain. Positions 107, 110, and 114 each coordinate a glycoprotein. Lysine 130 is covalently cross-linked (Glycyl lysine isopeptide (Lys-Gly) (interchain with G-Cter in ubiquitin)). Residues tyrosine 144, glutamine 153, arginine 163, and lysine 175 each coordinate a glycoprotein. A Glycyl lysine isopeptide (Lys-Gly) (interchain with G-Cter in ubiquitin) cross-link involves residue lysine 175. Disordered regions lie at residues 195-242 (SSAD…AGAS), 259-293 (ERSH…ASSD), and 317-352 (NQTV…VTEV). The span at 197 to 210 (ADGADSGSAHTGAS) shows a compositional bias: low complexity. Over residues 215–233 (VPSSTRPLTSVDGQLTSPV) the composition is skewed to polar residues. The span at 282–293 (STEETESDASSD) shows a compositional bias: acidic residues. Phosphoserine is present on residues serine 288 and serine 292.

Can form homooligomers. Interacts with PARsylated AXIN1, AXIN2, BLZF1, CASC3, H1-2, IPO7, LIG3, NCL, PARP1, XRCC1, XRCC5 and XRCC6. Interacts with DDB1, DHX15, IQGAP1, LRPPRC, PARP2, PRKDC, RUVBL2, TNKS1 and TNKS2. Binding often leads to interactor ubiquitination, in the presence of the appropriate E1 and E2 enzymes, and proteasomal degradation. Ubiquitinated; autoubiquitinated. Autoubiquitination is enhanced upon poly(ADP-ribose)-binding.

It localises to the cytoplasm. Its subcellular location is the cytosol. It is found in the nucleus. It carries out the reaction S-ubiquitinyl-[E2 ubiquitin-conjugating enzyme]-L-cysteine + [acceptor protein]-L-lysine = [E2 ubiquitin-conjugating enzyme]-L-cysteine + N(6)-ubiquitinyl-[acceptor protein]-L-lysine.. Its pathway is protein modification; protein ubiquitination. E3 ubiquitin-protein ligase that specifically binds poly-ADP-ribosylated (PARsylated) proteins and mediates their ubiquitination and subsequent degradation. May regulate many important biological processes, such as cell survival and DNA damage response. Acts as an activator of the Wnt signaling pathway by mediating the ubiquitination of PARsylated AXIN1 and AXIN2, 2 key components of the beta-catenin destruction complex. Acts in cooperation with tankyrase proteins (TNKS and TNKS2), which mediate PARsylation of target proteins AXIN1, AXIN2, BLZF1, CASC3, TNKS and TNKS2. Recognizes and binds tankyrase-dependent PARsylated proteins via its WWE domain and mediates their ubiquitination, leading to their degradation. Different ubiquitin linkage types have been observed: TNKS2 undergoes ubiquitination at 'Lys-48' and 'Lys-63', while AXIN1 is only ubiquitinated at 'Lys-48'. May regulate TNKS and TNKS2 subcellular location, preventing aggregation at a centrosomal location. Neuroprotective protein. Protects the brain against N-methyl-D-aspartate (NMDA) receptor-mediated glutamate excitotoxicity and ischemia, by interfering with PAR-induced cell death, called parthanatos. Prevents nuclear translocation of AIFM1 in a PAR-binding dependent manner. Does not affect PARP1 activation. Protects against cell death induced by DNA damaging agents, such as N-methyl-N-nitro-N-nitrosoguanidine (MNNG) and rescues cells from G1 arrest. Promotes cell survival after gamma-irradiation. Facilitates DNA repair. This chain is E3 ubiquitin-protein ligase RNF146 (Rnf146), found in Rattus norvegicus (Rat).